The chain runs to 520 residues: Gamma aminobutyrate transaminase 3, chloroplastic (520 aa).

The transit peptide at 1–44 (MAKITSLIGSGIVAATNQVGPHVKHIPAVGNLQKQIVSDQIQVR) directs the protein to the chloroplast. 172–173 (GS) contributes to the pyridoxal 5'-phosphate binding site. Position 205 (tyrosine 205) interacts with substrate. Aspartate 312 is a pyridoxal 5'-phosphate binding site. Lysine 341 contributes to the substrate binding site. Lysine 341 bears the N6-(pyridoxal phosphate)lysine mark.

It belongs to the class-III pyridoxal-phosphate-dependent aminotransferase family. Expressed in leaves, roots, stems, flowers and fruits.

Its subcellular location is the plastid. The protein localises to the chloroplast. It carries out the reaction 4-aminobutanoate + pyruvate = succinate semialdehyde + L-alanine. The enzyme catalyses 4-aminobutanoate + glyoxylate = succinate semialdehyde + glycine. Functionally, transaminase that degrades gamma-amino butyric acid (GABA) and uses pyruvate or glyoxylate as amino-group acceptor. Cannot use beta-alanine, ornithine, acetylornithine, serine, glycine, asparagine, glutamine, glutamate, valine, leucine, isoleucine, methionine, phenylalanine, histidine, lysine, arginine, aspartate, threonine, tyrosine, tryptophan, proline, or cysteine as amino donors. The protein is Gamma aminobutyrate transaminase 3, chloroplastic (GABA-TP3) of Solanum lycopersicum (Tomato).